The sequence spans 104 residues: Large ribosomal subunit protein bL21 (104 aa).

It belongs to the bacterial ribosomal protein bL21 family. Part of the 50S ribosomal subunit. Contacts protein L20.

In terms of biological role, this protein binds to 23S rRNA in the presence of protein L20. The polypeptide is Large ribosomal subunit protein bL21 (Helicobacter hepaticus (strain ATCC 51449 / 3B1)).